The chain runs to 123 residues: Large ribosomal subunit protein bL12 (123 aa).

Belongs to the bacterial ribosomal protein bL12 family. As to quaternary structure, homodimer. Part of the ribosomal stalk of the 50S ribosomal subunit. Forms a multimeric L10(L12)X complex, where L10 forms an elongated spine to which 2 to 4 L12 dimers bind in a sequential fashion. Binds GTP-bound translation factors.

Forms part of the ribosomal stalk which helps the ribosome interact with GTP-bound translation factors. Is thus essential for accurate translation. The chain is Large ribosomal subunit protein bL12 from Neisseria meningitidis serogroup C (strain 053442).